Consider the following 305-residue polypeptide: Probable pyridoxal 5'-phosphate synthase subunit pdx1 (305 aa).

D33 is a D-ribose 5-phosphate binding site. The Schiff-base intermediate with D-ribose 5-phosphate role is filled by K90. G162 contacts D-ribose 5-phosphate. R174 provides a ligand contact to D-glyceraldehyde 3-phosphate. D-ribose 5-phosphate is bound by residues G223 and 244-245; that span reads GS.

The protein belongs to the PdxS/SNZ family. As to quaternary structure, homohexamer.

The catalysed reaction is aldehydo-D-ribose 5-phosphate + D-glyceraldehyde 3-phosphate + L-glutamine = pyridoxal 5'-phosphate + L-glutamate + phosphate + 3 H2O + H(+). It functions in the pathway cofactor biosynthesis; pyridoxal 5'-phosphate biosynthesis. Functionally, catalyzes the formation of pyridoxal 5'-phosphate from ribose 5-phosphate (RBP), glyceraldehyde 3-phosphate (G3P) and ammonia. The ammonia is provided by pdx2. Can also use ribulose 5-phosphate and dihydroxyacetone phosphate as substrates, resulting from enzyme-catalyzed isomerization of RBP and G3P, respectively. The chain is Probable pyridoxal 5'-phosphate synthase subunit pdx1 (pdx1) from Dictyostelium discoideum (Social amoeba).